We begin with the raw amino-acid sequence, 37 residues long: Large ribosomal subunit protein bL36c (37 aa).

This sequence belongs to the bacterial ribosomal protein bL36 family.

Its subcellular location is the plastid. The protein localises to the chloroplast. In Marchantia polymorpha (Common liverwort), this protein is Large ribosomal subunit protein bL36c (rpl36).